Here is a 513-residue protein sequence, read N- to C-terminus: ATP synthase subunit alpha (513 aa).

Residue 169-176 participates in ATP binding; the sequence is GDRQIGKT.

This sequence belongs to the ATPase alpha/beta chains family. As to quaternary structure, F-type ATPases have 2 components, CF(1) - the catalytic core - and CF(0) - the membrane proton channel. CF(1) has five subunits: alpha(3), beta(3), gamma(1), delta(1), epsilon(1). CF(0) has three main subunits: a(1), b(2) and c(9-12). The alpha and beta chains form an alternating ring which encloses part of the gamma chain. CF(1) is attached to CF(0) by a central stalk formed by the gamma and epsilon chains, while a peripheral stalk is formed by the delta and b chains.

The protein localises to the cell inner membrane. The catalysed reaction is ATP + H2O + 4 H(+)(in) = ADP + phosphate + 5 H(+)(out). Produces ATP from ADP in the presence of a proton gradient across the membrane. The alpha chain is a regulatory subunit. This is ATP synthase subunit alpha from Shewanella halifaxensis (strain HAW-EB4).